The primary structure comprises 428 residues: Glutamate-1-semialdehyde 2,1-aminomutase (428 aa).

K267 carries the N6-(pyridoxal phosphate)lysine modification.

Belongs to the class-III pyridoxal-phosphate-dependent aminotransferase family. HemL subfamily. In terms of assembly, homodimer. Pyridoxal 5'-phosphate serves as cofactor.

It localises to the cytoplasm. The catalysed reaction is (S)-4-amino-5-oxopentanoate = 5-aminolevulinate. Its pathway is porphyrin-containing compound metabolism; protoporphyrin-IX biosynthesis; 5-aminolevulinate from L-glutamyl-tRNA(Glu): step 2/2. This Sulfurihydrogenibium sp. (strain YO3AOP1) protein is Glutamate-1-semialdehyde 2,1-aminomutase.